Consider the following 213-residue polypeptide: Endonuclease III (213 aa).

The HhH domain occupies 108–127 (FKELIKLPGVGRKTANVVLN). 4 residues coordinate [4Fe-4S] cluster: Cys-187, Cys-194, Cys-197, and Cys-203.

This sequence belongs to the Nth/MutY family. [4Fe-4S] cluster serves as cofactor.

It carries out the reaction 2'-deoxyribonucleotide-(2'-deoxyribose 5'-phosphate)-2'-deoxyribonucleotide-DNA = a 3'-end 2'-deoxyribonucleotide-(2,3-dehydro-2,3-deoxyribose 5'-phosphate)-DNA + a 5'-end 5'-phospho-2'-deoxyribonucleoside-DNA + H(+). DNA repair enzyme that has both DNA N-glycosylase activity and AP-lyase activity. The DNA N-glycosylase activity releases various damaged pyrimidines from DNA by cleaving the N-glycosidic bond, leaving an AP (apurinic/apyrimidinic) site. The AP-lyase activity cleaves the phosphodiester bond 3' to the AP site by a beta-elimination, leaving a 3'-terminal unsaturated sugar and a product with a terminal 5'-phosphate. This is Endonuclease III from Rickettsia felis (strain ATCC VR-1525 / URRWXCal2) (Rickettsia azadi).